Here is a 317-residue protein sequence, read N- to C-terminus: Acetyl-coenzyme A carboxylase carboxyl transferase subunit alpha (317 aa).

One can recognise a CoA carboxyltransferase C-terminal domain in the interval 40-293; the sequence is LEVRVREAIL…GDVIANALAE (254 aa).

It belongs to the AccA family. As to quaternary structure, acetyl-CoA carboxylase is a heterohexamer composed of biotin carboxyl carrier protein (AccB), biotin carboxylase (AccC) and two subunits each of ACCase subunit alpha (AccA) and ACCase subunit beta (AccD).

The protein resides in the cytoplasm. It carries out the reaction N(6)-carboxybiotinyl-L-lysyl-[protein] + acetyl-CoA = N(6)-biotinyl-L-lysyl-[protein] + malonyl-CoA. It functions in the pathway lipid metabolism; malonyl-CoA biosynthesis; malonyl-CoA from acetyl-CoA: step 1/1. Its function is as follows. Component of the acetyl coenzyme A carboxylase (ACC) complex. First, biotin carboxylase catalyzes the carboxylation of biotin on its carrier protein (BCCP) and then the CO(2) group is transferred by the carboxyltransferase to acetyl-CoA to form malonyl-CoA. This chain is Acetyl-coenzyme A carboxylase carboxyl transferase subunit alpha, found in Rhizobium etli (strain CIAT 652).